Consider the following 137-residue polypeptide: Proofreading thioesterase EntH (137 aa).

Glutamate 63 serves as the catalytic Nucleophile or proton acceptor.

It belongs to the thioesterase PaaI family. As to quaternary structure, homotetramer. Dimer of dimers. Interacts specifically with the aryl carrier protein (ArCP) domain of EntB.

The protein localises to the cytoplasm. It participates in siderophore biosynthesis; enterobactin biosynthesis. Required for optimal enterobactin synthesis. Acts as a proofreading enzyme that prevents EntB misacylation by hydrolyzing the thioester bound existing between EntB and wrongly charged molecules. The polypeptide is Proofreading thioesterase EntH (Escherichia coli O157:H7 (strain EC4115 / EHEC)).